The following is a 199-amino-acid chain: Thymidine kinase (199 aa).

Residues 15–22 (GSMFSGKS) and 88–91 (DEVQ) each bind ATP. Glu-89 functions as the Proton acceptor in the catalytic mechanism. Positions 145, 148, 183, and 186 each coordinate Zn(2+).

This sequence belongs to the thymidine kinase family. As to quaternary structure, homotetramer.

Its subcellular location is the cytoplasm. The catalysed reaction is thymidine + ATP = dTMP + ADP + H(+). This Staphylococcus saprophyticus subsp. saprophyticus (strain ATCC 15305 / DSM 20229 / NCIMB 8711 / NCTC 7292 / S-41) protein is Thymidine kinase.